A 628-amino-acid polypeptide reads, in one-letter code: MESKTYYLDKISNNLGYPVYFLFDEIHVIENTNNNIKEIIQVEPDYSKPDLKFTEYRNGFFATNYIIEVAKVPLLDVTTIEKLLQYCSSFKLYKRFFENNRLDLCDYLITKDIKLTRRSDKFILNRIKKLDKDSLMYIINHNDFFQIRWEVIFKFVVSNITNISSDTNNEIIDYLMTLINNFDYKIDYDEIIKHIMIDPRTLKIKNIELFAELVDINYMDILKQACFFGSTEIINYVLNKGIEYDFYELIKSDISITALKFFIDKGHYIDDTTINILVNPESKNINRLIRSLINQKILTQDLITKQLLETIIKTDIHSIEYLINDFDIINMVDLDEIMIEALRYNFTELIDWCINNGSDINRHMSFIMKECCPEIVSKFIELGAQVPNDVSCYNPELIEIYCMYDDCIPYLKTIIEKEFDTAENIIHNIIENRPHIQVLKYLLSEITNHDLTIPKLANMFIHDYCYCSSENYGDLISLNIQFNIEQQIIIQIIEGNFINAKELIFTNYDCYNNLKILFVTMMSNNIDMLEFLLEINNYDQDYLQWVLIFSSRNVTMLEYIINNTNIDPNLFKQEMSTFSSHFKSYSVDYLKLNDYYEGTSILINSRLDIFMKNIGINIFKSYDNQRRL.

ANK repeat units lie at residues 217-246 (NYMD…EYDF), 333-362 (DLDE…DINR), 421-451 (TAEN…NHDL), and 512-542 (NNLK…DQDY).

This Acanthamoeba polyphaga mimivirus (APMV) protein is Putative ankyrin repeat protein L769.